The sequence spans 243 residues: Segregation and condensation protein A (243 aa).

The protein belongs to the ScpA family. In terms of assembly, component of a cohesin-like complex composed of ScpA, ScpB and the Smc homodimer, in which ScpA and ScpB bind to the head domain of Smc. The presence of the three proteins is required for the association of the complex with DNA.

The protein resides in the cytoplasm. Participates in chromosomal partition during cell division. May act via the formation of a condensin-like complex containing Smc and ScpB that pull DNA away from mid-cell into both cell halves. The chain is Segregation and condensation protein A from Staphylococcus aureus (strain NCTC 8325 / PS 47).